Consider the following 270-residue polypeptide: MTSVSSDSRKQFKGSGDHVFDFDNKENHDFLSLTIKQDNNNNNNNNTNVSLSPSIKSQATSSTGGNKNQIFSQMRELDKKSLMLIETYYRDKLITYQEKLKRELEQIYNKKLQSLKIQYDSDSYLKFKQFELETKKALLLLLKEFQDLKKSKQQQEKQLKLQQIKQESNNNNNNNNNNNNNNNNNNNNNNNNDDDQQKDIDNSNDIVNDFKTDKILKEKEEILNKLELITKSITDLFIQQVDISTDTIDFQSFLSNIVATTTTTTATISN.

2 disordered regions span residues 35–67 (IKQDNNNNNNNNTNVSLSPSIKSQATSSTGGNK) and 168–204 (SNNNNNNNNNNNNNNNNNNNNNNNNDDDQQKDIDNSN). Residues 39 to 48 (NNNNNNNNTN) are compositionally biased toward low complexity. The span at 49–67 (VSLSPSIKSQATSSTGGNK) shows a compositional bias: polar residues. Over residues 168 to 191 (SNNNNNNNNNNNNNNNNNNNNNNN) the composition is skewed to low complexity.

This is an uncharacterized protein from Dictyostelium discoideum (Social amoeba).